We begin with the raw amino-acid sequence, 156 residues long: 3-dehydroquinate dehydratase (156 aa).

The Proton acceptor role is filled by Tyr22. Positions 73, 79, and 86 each coordinate substrate. The active-site Proton donor is the His99. Residues 100–101 (LS) and Arg110 each bind substrate.

Belongs to the type-II 3-dehydroquinase family. Homododecamer.

It carries out the reaction 3-dehydroquinate = 3-dehydroshikimate + H2O. It participates in metabolic intermediate biosynthesis; chorismate biosynthesis; chorismate from D-erythrose 4-phosphate and phosphoenolpyruvate: step 3/7. Functionally, catalyzes a trans-dehydration via an enolate intermediate. The chain is 3-dehydroquinate dehydratase from Nitratiruptor sp. (strain SB155-2).